An 80-amino-acid chain; its full sequence is Conotoxin PnMKLT1-0121 (80 aa).

The first 22 residues, 1 to 22, serve as a signal peptide directing secretion; sequence MKLTCMMIVAVLFLTAWTFATA. A propeptide spanning residues 23–49 is cleaved from the precursor; sequence DDPRNRLENFFSKTQHEMKNPEASKLN. Intrachain disulfides connect C52–C67, C59–C71, and C66–C75.

It belongs to the conotoxin O1 superfamily. In terms of tissue distribution, expressed by the venom duct.

Its subcellular location is the secreted. The chain is Conotoxin PnMKLT1-0121 from Conus pennaceus (Feathered cone).